The following is a 145-amino-acid chain: Large ribosomal subunit protein uL15 (145 aa).

The segment covering 1 to 30 has biased composition (basic residues); that stretch reads MAHSLRKTRKLRGHVSHGHGRIGKHRKHPG. The interval 1-48 is disordered; the sequence is MAHSLRKTRKLRGHVSHGHGRIGKHRKHPGGRGNAGGQHHHRINRDKY.

This sequence belongs to the universal ribosomal protein uL15 family. Component of the large ribosomal subunit.

It is found in the cytoplasm. The protein resides in the cytosol. Its subcellular location is the rough endoplasmic reticulum. In terms of biological role, component of the large ribosomal subunit. The protein is Large ribosomal subunit protein uL15 (rpl-27a) of Oscheius tipulae.